Consider the following 420-residue polypeptide: Pyridinium-3,5-bisthiocarboxylic acid mononucleotide nickel insertion protein (420 aa).

A disordered region spans residues 81–104 (NHEHKHNHHEIKNDEPAHSHEHHH). The segment covering 90 to 99 (EIKNDEPAHS) has biased composition (basic and acidic residues).

The protein belongs to the LarC family.

It catalyses the reaction Ni(II)-pyridinium-3,5-bisthiocarboxylate mononucleotide = pyridinium-3,5-bisthiocarboxylate mononucleotide + Ni(2+). In terms of biological role, involved in the biosynthesis of a nickel-pincer cofactor ((SCS)Ni(II) pincer complex). Binds Ni(2+), and functions in nickel delivery to pyridinium-3,5-bisthiocarboxylic acid mononucleotide (P2TMN), to form the mature cofactor. Is thus probably required for the activation of nickel-pincer cofactor-dependent enzymes. The sequence is that of Pyridinium-3,5-bisthiocarboxylic acid mononucleotide nickel insertion protein from Clostridium acetobutylicum (strain ATCC 824 / DSM 792 / JCM 1419 / IAM 19013 / LMG 5710 / NBRC 13948 / NRRL B-527 / VKM B-1787 / 2291 / W).